Reading from the N-terminus, the 557-residue chain is MFS-type transporter clz4 (557 aa).

The next 14 helical transmembrane spans lie at 22-42, 59-79, 89-109, 120-140, 150-170, 179-199, 217-237, 245-265, 269-289, 319-339, 346-366, 379-399, 419-439, and 479-499; these read LIIV…DHNG, SITW…VLYG, ALFV…GFAT, LTGA…TDVV, AVVA…AAGV, GLFW…GYIL, WLGS…VSGP, SLLV…FLFI, LATL…SALL, VISG…SMIA, SGQY…GSLL, VIIV…PMVI, FFRF…LQST, and HVYI…FVWK. Residues 505–523 show a composition bias toward basic and acidic residues; the sequence is SRPTENNDDIEHAPARGIE. A disordered region spans residues 505–557; it reads SRPTENNDDIEHAPARGIEREDEQSSLIYDREPSAVSYGTVEAGEPNRLRRGG.

It belongs to the major facilitator superfamily. TCR/Tet family.

Its subcellular location is the membrane. In terms of biological role, MFS-type transporter; part of the gene cluster that mediates the biosynthesis of squalestatin S1 (SQS1, also known as zaragozic acid A), a heavily oxidized fungal polyketide that offers potent cholesterol lowering activity by targeting squalene synthase (SS). This is MFS-type transporter clz4 from Cochliobolus lunatus (Filamentous fungus).